Reading from the N-terminus, the 132-residue chain is Histone H2A-alpha (132 aa).

Position 2 is an N-acetylserine (Ser-2). Residues Lys-5 and Lys-9 each carry the N6-acetyllysine modification. At Gln-106 the chain carries N5-methylglutamine. The residue at position 129 (Ser-129) is a Phosphoserine. Positions 129 to 130 (SQ) match the [ST]-Q motif motif.

Belongs to the histone H2A family. In terms of assembly, the nucleosome is a histone octamer containing two molecules each of H2A, H2B, H3 and H4 assembled in one H3-H4 heterotetramer and two H2A-H2B heterodimers. The octamer wraps approximately 147 bp of DNA. Interacts with mdb1 (via BRCT domain) in vitro; this interaction requires phosphorylation of this protein at the S/T-Q motif. Post-translationally, phosphorylated to form H2AS128ph (gamma-H2A) in response to DNA double-strand breaks (DSBs) generated by exogenous genotoxic agents and by stalled replication forks. Phosphorylation is dependent on the DNA damage checkpoint kinases rad3/ATR and tel1/ATM, spreads on either side of a detected DSB site and may mark the surrounding chromatin for recruitment of proteins required for DNA damage signaling and repair. Gamma-H2A is required for recruiting crb2, a modulator of DNA damage checkpoint signaling, to DSB sites. Gamma-H2A is removed from the DNA prior to the strand invasion-primer extension step of the repair process and subsequently dephosphorylated. Dephosphorylation is necessary for efficient recovery from the DNA damage checkpoint. Acetylated by esa1 to form H2AK4ac and H2AK7ac.

It localises to the nucleus. The protein localises to the chromosome. Core component of nucleosome which plays a central role in DNA double strand break (DSB) repair. Nucleosomes wrap and compact DNA into chromatin, limiting DNA accessibility to the cellular machineries which require DNA as a template. Histones thereby play a central role in transcription regulation, DNA repair, DNA replication and chromosomal stability. DNA accessibility is regulated via a complex set of post-translational modifications of histones, also called histone code, and nucleosome remodeling. The protein is Histone H2A-alpha (hta1) of Schizosaccharomyces pombe (strain 972 / ATCC 24843) (Fission yeast).